The following is a 281-amino-acid chain: 4-diphosphocytidyl-2-C-methyl-D-erythritol kinase (281 aa).

The active site involves K11. 95 to 105 (PVAAGLGGGSS) serves as a coordination point for ATP. D137 is a catalytic residue.

The protein belongs to the GHMP kinase family. IspE subfamily.

It catalyses the reaction 4-CDP-2-C-methyl-D-erythritol + ATP = 4-CDP-2-C-methyl-D-erythritol 2-phosphate + ADP + H(+). It functions in the pathway isoprenoid biosynthesis; isopentenyl diphosphate biosynthesis via DXP pathway; isopentenyl diphosphate from 1-deoxy-D-xylulose 5-phosphate: step 3/6. Its function is as follows. Catalyzes the phosphorylation of the position 2 hydroxy group of 4-diphosphocytidyl-2C-methyl-D-erythritol. This is 4-diphosphocytidyl-2-C-methyl-D-erythritol kinase from Geobacter metallireducens (strain ATCC 53774 / DSM 7210 / GS-15).